A 119-amino-acid polypeptide reads, in one-letter code: Ribonuclease P protein component (119 aa).

The protein belongs to the RnpA family. As to quaternary structure, consists of a catalytic RNA component (M1 or rnpB) and a protein subunit.

It catalyses the reaction Endonucleolytic cleavage of RNA, removing 5'-extranucleotides from tRNA precursor.. Its function is as follows. RNaseP catalyzes the removal of the 5'-leader sequence from pre-tRNA to produce the mature 5'-terminus. It can also cleave other RNA substrates such as 4.5S RNA. The protein component plays an auxiliary but essential role in vivo by binding to the 5'-leader sequence and broadening the substrate specificity of the ribozyme. This chain is Ribonuclease P protein component, found in Salmonella paratyphi A (strain AKU_12601).